The chain runs to 471 residues: Trigger factor (471 aa).

One can recognise a PPIase FKBP-type domain in the interval E169 to L254. The disordered stretch occupies residues V435 to A471. Positions K461 to A471 are enriched in basic and acidic residues.

The protein belongs to the FKBP-type PPIase family. Tig subfamily.

The protein resides in the cytoplasm. The catalysed reaction is [protein]-peptidylproline (omega=180) = [protein]-peptidylproline (omega=0). Functionally, involved in protein export. Acts as a chaperone by maintaining the newly synthesized protein in an open conformation. Functions as a peptidyl-prolyl cis-trans isomerase. This is Trigger factor from Brucella abortus (strain S19).